Here is a 403-residue protein sequence, read N- to C-terminus: MTTAPTPSIFEPARLGPLTLRNRIVKAATFEGVMPRGAVSDDLINFHAEVARGGAAMTTVAYCAVSPGGRVHRDTLVMDERALPGLRRLTDAVHAEGALAAAQIGHAGLVANTLSNKTKTLAPSTRLSPPAMGLVKGATLAELDGVVSDFERTARVAVDAGFDAIEVHLGHNYLLSSFMSPNLNKRHDRYGGSVAKRAEYPRRVIEAVRVAAGSSVAVTAKFNMSDGVPKGLWLDQSLPIAQILEADGHLDAMQLTGGSSLLNGMYFFRGEVPLAEFVASQPKLVGYGLKFYGPKIFPTYPFEEGFFLPFARQFRQALRMPLILLGGINRVDTIEHALDEGFEFVAMARALLRDPQLVNKFQAESVDQGLCIHCNKCMPTIYTGTRCVVRDALVVREAPRLGQ.

Gln-103 is an FMN binding site. Catalysis depends on Tyr-173, which acts as the Proton donor. 348–349 (AR) serves as a coordination point for FMN.

It belongs to the NADH:flavin oxidoreductase/NADH oxidase family. FMN serves as cofactor.

The enzyme catalyses 2 4-sulfanylbutanoate + NAD(+) = 4,4'-disulfanyldibutanoate + NADH + H(+). Its activity is regulated as follows. Inactivated by cobalt, nickel and zinc ions. In terms of biological role, involved in the degradation of the organic disulfide 4,4'-dithiodibutyric acid (DTDB). Catalyzes the initial cleavage of DTDB into 2 molecules of 4-mercaptobutyric acid (4MB). Low activities are observed with other disulfide compounds, such as 3,3'-dithiodipropionic acid DTDP, 3,3'-thiodipropionic acid TDP and DTNB. The chain is 4,4'-dithiodibutanoate disulfide reductase from Rhodococcus erythropolis (Arthrobacter picolinophilus).